The primary structure comprises 348 residues: Protein RecA (348 aa).

Residue 66–73 (GPESSGKT) participates in ATP binding.

Belongs to the RecA family.

Its subcellular location is the cytoplasm. In terms of biological role, can catalyze the hydrolysis of ATP in the presence of single-stranded DNA, the ATP-dependent uptake of single-stranded DNA by duplex DNA, and the ATP-dependent hybridization of homologous single-stranded DNAs. It interacts with LexA causing its activation and leading to its autocatalytic cleavage. The protein is Protein RecA of Neisseria meningitidis serogroup C / serotype 2a (strain ATCC 700532 / DSM 15464 / FAM18).